The chain runs to 596 residues: ATP-dependent lipid A-core flippase (596 aa).

Transmembrane regions (helical) follow at residues 34-54 (VWVL…EAGI), 80-100 (AAVV…GYLL), 138-158 (AVVF…ITLV), 164-184 (VVFL…IVAI), 263-283 (QPLT…IAVV), and 292-312 (VGGF…LKHL). In terms of domain architecture, ABC transmembrane type-1 spans 38–321 (VAGVLAMAAV…LMDVNQPLQR (284 aa)). The 237-residue stretch at 353 to 589 (IEFSHVSFSY…GGLYAHLHRI (237 aa)) folds into the ABC transporter domain. Residue 389–396 (GPSGSGKT) participates in ATP binding.

This sequence belongs to the ABC transporter superfamily. Lipid exporter (TC 3.A.1.106) family. In terms of assembly, homodimer.

The protein localises to the cell inner membrane. The catalysed reaction is ATP + H2O + lipid A-core oligosaccharideSide 1 = ADP + phosphate + lipid A-core oligosaccharideSide 2.. In terms of biological role, involved in lipopolysaccharide (LPS) biosynthesis. Translocates lipid A-core from the inner to the outer leaflet of the inner membrane. Transmembrane domains (TMD) form a pore in the inner membrane and the ATP-binding domain (NBD) is responsible for energy generation. In Burkholderia mallei (strain ATCC 23344), this protein is ATP-dependent lipid A-core flippase.